Consider the following 148-residue polypeptide: 3-hydroxyacyl-[acyl-carrier-protein] dehydratase FabZ (148 aa).

Residue histidine 48 is part of the active site.

It belongs to the thioester dehydratase family. FabZ subfamily.

The protein localises to the cytoplasm. It carries out the reaction a (3R)-hydroxyacyl-[ACP] = a (2E)-enoyl-[ACP] + H2O. In terms of biological role, involved in unsaturated fatty acids biosynthesis. Catalyzes the dehydration of short chain beta-hydroxyacyl-ACPs and long chain saturated and unsaturated beta-hydroxyacyl-ACPs. This chain is 3-hydroxyacyl-[acyl-carrier-protein] dehydratase FabZ, found in Campylobacter concisus (strain 13826).